Reading from the N-terminus, the 830-residue chain is BLOC-2 complex member HPS5 homolog (830 aa).

WD repeat units follow at residues 25 to 64, 67 to 106, and 114 to 153; these read RNNSRIKFTCFDCSPKYFVFGANSGSLYLYDRITTSFLAI, SQLGTIGKVSISHNEKQIAIGNQTGSIGILSTELAPSTDG, and GGPAFVTSFCWTEDDRELYCGDSRGIVSLIQFSLFMGRNI. A coiled-coil region spans residues 578-604; the sequence is DTETIVRLLRKLETLMEENEEPNARLK.

The protein belongs to the HPS5 family.

In terms of biological role, has a role in the biogenesis of eye pigment granules. Eye pigment granules are specialized forms of late endosomes or lysosomes. Biogenesis of pigment granules in the eye requires molecular components required for protein delivery to lysosomes. The polypeptide is BLOC-2 complex member HPS5 homolog (Anopheles gambiae (African malaria mosquito)).